The sequence spans 404 residues: Keratin, type I cuticular Ha3-II (404 aa).

A head region spans residues 1–56 (MPYNFCLPSLSCRTSCSSRPCVPPSCHGYTLPGACNIPANVSNCNWFCEGSFNGSE). Positions 56–367 (EKETMQFLND…SLLESEDCKL (312 aa)) constitute an IF rod domain. The segment at 57-91 (KETMQFLNDRLASYLEKVRQLERDNAELENLIRER) is coil 1A. The linker 1 stretch occupies residues 92-102 (SQQQEPLLCPS). Positions 103–203 (YQSYFKTIEE…HEQEVNTLRC (101 aa)) are coil 1B. The interval 204-219 (QLGDRLNVEVDAAPAV) is linker 12. The segment at 220 to 363 (DLNQVLNETR…NTYRSLLESE (144 aa)) is coil 2. Positions 364–404 (DCKLPSNPCATTNACEKPIGSCVTNPCGPRSRCGPCNTFGY) are tail.

This sequence belongs to the intermediate filament family.

The polypeptide is Keratin, type I cuticular Ha3-II (KRT33B) (Homo sapiens (Human)).